The primary structure comprises 520 residues: Bifunctional purine biosynthesis protein PurH (520 aa).

One can recognise an MGS-like domain in the interval 1–146 (MAPVALLSVS…KNHADVAVLT (146 aa)).

This sequence belongs to the PurH family.

The enzyme catalyses (6R)-10-formyltetrahydrofolate + 5-amino-1-(5-phospho-beta-D-ribosyl)imidazole-4-carboxamide = 5-formamido-1-(5-phospho-D-ribosyl)imidazole-4-carboxamide + (6S)-5,6,7,8-tetrahydrofolate. It carries out the reaction IMP + H2O = 5-formamido-1-(5-phospho-D-ribosyl)imidazole-4-carboxamide. It participates in purine metabolism; IMP biosynthesis via de novo pathway; 5-formamido-1-(5-phospho-D-ribosyl)imidazole-4-carboxamide from 5-amino-1-(5-phospho-D-ribosyl)imidazole-4-carboxamide (10-formyl THF route): step 1/1. The protein operates within purine metabolism; IMP biosynthesis via de novo pathway; IMP from 5-formamido-1-(5-phospho-D-ribosyl)imidazole-4-carboxamide: step 1/1. The protein is Bifunctional purine biosynthesis protein PurH of Synechococcus sp. (strain CC9605).